A 244-amino-acid polypeptide reads, in one-letter code: MDALVLFLQLLVLLLTLPLHLLALLGCWQPICKTYFPYFMAMLTARSYKKMESKKRELFSQIKDLKGTSGNVALLELGCGTGANFQFYPQGCKVTCVDPNPNFEKFLTKSMAENRHLQYERFIVAYGENMKQLADSSMDVVVCTLVLCSVQSPRKVLQEVQRVLRPGGLLFFWEHVAEPQGSRAFLWQRVLEPTWKHIGDGCHLTRETWKDIERAQFSEVQLEWQPPPFRWLPVGPHIMGKAVK.

A signal peptide spans 1–23 (MDALVLFLQLLVLLLTLPLHLLA).

This sequence belongs to the methyltransferase superfamily.

The protein localises to the endoplasmic reticulum membrane. The protein resides in the lipid droplet. It localises to the microsome. It is found in the cytoplasm. Its subcellular location is the cytosol. It catalyses the reaction a thiol + S-adenosyl-L-methionine = a methyl thioether + S-adenosyl-L-homocysteine + H(+). Thiol S-methyltransferase that catalyzes the transfer of a methyl group from S-adenosyl-L-methionine to alkyl and phenolic thiol-containing acceptor substrates. Together with TMT1B accounts for most of S-thiol methylation activity in the endoplasmic reticulum of hepatocytes. Selectively methylates S-centered nucleophiles from metabolites such as hydrogen sulfide and dithiothreitol. The protein is Thiol S-methyltransferase TMT1B of Mus musculus (Mouse).